The sequence spans 273 residues: Oligodendrocyte transcription factor 3 (273 aa).

The segment covering Met-1–Ser-14 has biased composition (low complexity). Positions Met-1–Lys-72 are disordered. A compositionally biased stretch (basic residues) spans Asp-24–Gln-34. The span at Arg-37–Asp-47 shows a compositional bias: polar residues. Residues Ser-69 to Asn-90 adopt a coiled-coil conformation. Positions Gln-84–Leu-138 constitute a bHLH domain.

In terms of tissue distribution, weakly expressed, mainly in non-neural tissues.

The protein resides in the nucleus. In terms of biological role, may determine the distinct specification program of class A neurons in the dorsal part of the spinal cord and suppress specification of class B neurons. The chain is Oligodendrocyte transcription factor 3 (Olig3) from Mus musculus (Mouse).